Consider the following 215-residue polypeptide: NAD(P)H-quinone oxidoreductase subunit I (215 aa).

2 4Fe-4S ferredoxin-type domains span residues 55 to 84 (GRIH…VDWV) and 95 to 124 (RNYS…MTEE). [4Fe-4S] cluster contacts are provided by Cys-64, Cys-67, Cys-70, Cys-74, Cys-104, Cys-107, Cys-110, and Cys-114. Positions 166–215 (AGEMDPHGVPNDRPRAGQLPSQVLETLAPPAKVGAKNEGQSTGTTQEGEA) are disordered. Positions 169-180 (MDPHGVPNDRPR) are enriched in basic and acidic residues. Over residues 203-215 (EGQSTGTTQEGEA) the composition is skewed to polar residues.

It belongs to the complex I 23 kDa subunit family. As to quaternary structure, NDH-1 is composed of at least 11 different subunits. [4Fe-4S] cluster is required as a cofactor.

The protein localises to the cellular thylakoid membrane. The enzyme catalyses a plastoquinone + NADH + (n+1) H(+)(in) = a plastoquinol + NAD(+) + n H(+)(out). It carries out the reaction a plastoquinone + NADPH + (n+1) H(+)(in) = a plastoquinol + NADP(+) + n H(+)(out). NDH-1 shuttles electrons from an unknown electron donor, via FMN and iron-sulfur (Fe-S) centers, to quinones in the respiratory and/or the photosynthetic chain. The immediate electron acceptor for the enzyme in this species is believed to be plastoquinone. Couples the redox reaction to proton translocation, and thus conserves the redox energy in a proton gradient. The protein is NAD(P)H-quinone oxidoreductase subunit I of Parasynechococcus marenigrum (strain WH8102).